The sequence spans 389 residues: Large envelope protein (389 aa).

N-acetylmethionine is present on Met-1. A lipid anchor (N-myristoyl glycine; by host) is attached at Gly-2. A pre-S1 region spans residues 2-108; the sequence is GQNLSTSNPL…PPLRNTHPQA (107 aa). Residues 2-163 form a pre-S region; the sequence is GQNLSTSNPL…FSRIGDPALN (162 aa). At 2 to 170 the chain is on the virion surface; in external conformation side; that stretch reads GQNLSTSNPL…ALNMENITSG (169 aa). The Intravirion; in internal conformation portion of the chain corresponds to 2-242; the sequence is GQNLSTSNPL…PGYRWMCLRR (241 aa). A glycan (O-linked (GalNAc...) threonine) is linked at Asn-37. Positions 76–103 are disordered; the sequence is TLPANPPPASTNRQSGRQPTPLSPPLRN. Over residues 85 to 95 the composition is skewed to polar residues; sequence STNRQSGRQPT. The interval 109–163 is pre-S2; it reads MQWNSTTFHQTLQDPRVRGLYFPAGGSSSGTVNPVLTTASPLSSIFSRIGDPALN. Residues 171–191 traverse the membrane as a helical segment; the sequence is FLGPLLVLQAGFFLLTRILTI. Over 192 to 242 the chain is Intravirion; in external conformation; the sequence is PQSLDSWWTSLNFLGGTTVCLGQNSQSPTSNHSPTSCPPTCPGYRWMCLRR. A helical membrane pass occupies residues 243–263; that stretch reads FIIFLFILLLCLIFLLVLLDY. The Virion surface segment spans residues 264 to 337; that stretch reads QGMLPVCPLI…WASARFSWLS (74 aa). An N-linked (GlcNAc...) asparagine; by host glycan is attached at Asn-309. Residues 338 to 358 form a helical membrane-spanning segment; it reads LLVPFVQWFVGLSPTVWLSVI. Residues 359-364 are Intravirion-facing; it reads WMMWYW. Residues 365–387 form a helical membrane-spanning segment; it reads GPSLYSILSPFLPLLPIFFCLWV. Over 388–389 the chain is Virion surface; that stretch reads YI.

It belongs to the orthohepadnavirus major surface antigen family. In its internal form (Li-HBsAg), interacts with the capsid protein and with the isoform S. Interacts with host chaperone CANX. In terms of assembly, associates with host chaperone CANX through its pre-S2 N glycan; this association may be essential for isoform M proper secretion. As to quaternary structure, interacts with isoform L. Interacts with the antigens of satellite virus HDV (HDVAgs); this interaction is required for encapsidation of HDV genomic RNA. Isoform M is N-terminally acetylated by host at a ratio of 90%, and N-glycosylated by host at the pre-S2 region. In terms of processing, myristoylated.

It is found in the virion membrane. The large envelope protein exists in two topological conformations, one which is termed 'external' or Le-HBsAg and the other 'internal' or Li-HBsAg. In its external conformation the protein attaches the virus to cell receptors and thereby initiating infection. This interaction determines the species specificity and liver tropism. This attachment induces virion internalization predominantly through caveolin-mediated endocytosis. The large envelope protein also assures fusion between virion membrane and endosomal membrane. In its internal conformation the protein plays a role in virion morphogenesis and mediates the contact with the nucleocapsid like a matrix protein. In terms of biological role, the middle envelope protein plays an important role in the budding of the virion. It is involved in the induction of budding in a nucleocapsid independent way. In this process the majority of envelope proteins bud to form subviral lipoprotein particles of 22 nm of diameter that do not contain a nucleocapsid. This chain is Large envelope protein, found in Homo sapiens (Human).